Reading from the N-terminus, the 94-residue chain is Large ribosomal subunit protein bL25 (94 aa).

This sequence belongs to the bacterial ribosomal protein bL25 family. In terms of assembly, part of the 50S ribosomal subunit; part of the 5S rRNA/L5/L18/L25 subcomplex. Contacts the 5S rRNA. Binds to the 5S rRNA independently of L5 and L18.

This is one of the proteins that binds to the 5S RNA in the ribosome where it forms part of the central protuberance. This Enterobacter sp. (strain 638) protein is Large ribosomal subunit protein bL25.